A 422-amino-acid chain; its full sequence is Protein TEX1 (422 aa).

WD repeat units follow at residues 61-100 (ITPN…FDKS), 158-197 (GSKT…SSVC), 207-246 (EDND…LEVC), 251-290 (AHTG…CELI), and 293-332 (DLNS…LLHS). The disordered stretch occupies residues 388-422 (KRRKNNGGGNNHNKRTSKNTDRIGKDRPSRFNSKK). The span at 405–416 (KNTDRIGKDRPS) shows a compositional bias: basic and acidic residues.

The protein belongs to the THOC3 family. As to quaternary structure, component of the transcription/export (TREX) complex and the THO complex.

It is found in the nucleus. In terms of biological role, component of the TREX complex, which operates in coupling transcription elongation to mRNA export. In Saccharomyces cerevisiae (strain ATCC 204508 / S288c) (Baker's yeast), this protein is Protein TEX1 (TEX1).